Here is a 421-residue protein sequence, read N- to C-terminus: MSKLTIVRGFNDVLPLDSYKWQFLESKVKLILDRYNYSETRLPIVERSELFHRSVGESSDIVSKETYDFQDRNGDSLTLRPEGTAGCVRMVIENNLATRGQTQKLWYCGPMFRYERPQKGRYRQFYQLGVEAYGFDGIAIDLEVIAIAWSLFKELGISEYVTLELNSLGSSLNRQEYTQALLQYLKPYHAELDEDSIKRLDKNPLRILDSKIEKTQKILANAPKLIDFIDHDLRLRFKQTCQYLDALGVRYKLNENLVRGLDYYTGLVFEWTTDKLGSQSAICAGGRYDGLVDNLGGQKTAAIGFAIGMERLLLLLEDLGKLPNQDNACDVFFILDSAQLHQSLAIVENIRQELPQLKIDMDLKFGSFKSQFKKADKSGAKVAIIIGQDELDNGFAGIKFLQQNEEQQQVAFNELINFLER.

It belongs to the class-II aminoacyl-tRNA synthetase family. Homodimer.

The protein localises to the cytoplasm. The enzyme catalyses tRNA(His) + L-histidine + ATP = L-histidyl-tRNA(His) + AMP + diphosphate + H(+). This is Histidine--tRNA ligase from Francisella tularensis subsp. holarctica (strain LVS).